Reading from the N-terminus, the 576-residue chain is Septation ring formation regulator EzrA (576 aa).

The Extracellular portion of the chain corresponds to 1–7 (MSSTVII). Residues 8–26 (LIVVLLVILVAFYAFAILM) form a helical membrane-spanning segment. Over 27–576 (RKKTEDRILA…FKNKPTPDYL (550 aa)) the chain is Cytoplasmic. Coiled-coil stretches lie at residues 105–134 (RARESVADSEAQIELMEGDVEGIRQGVAQL) and 277–301 (EQFELDRVEAELGLIQEKVEELYAI).

It belongs to the EzrA family.

It is found in the cell membrane. Its function is as follows. Negative regulator of FtsZ ring formation; modulates the frequency and position of FtsZ ring formation. Inhibits FtsZ ring formation at polar sites. Interacts either with FtsZ or with one of its binding partners to promote depolymerization. The polypeptide is Septation ring formation regulator EzrA (Lactococcus lactis subsp. lactis (strain IL1403) (Streptococcus lactis)).